Here is a 268-residue protein sequence, read N- to C-terminus: Homeobox protein Hox-C4a (268 aa).

A disordered region spans residues 70 to 129 (PEPDTQRGHGLPHAGHLLGKGQSASCEPPPLPLSPATPSAASSACNQATPEHPNSSASAK). Composition is skewed to low complexity over residues 77-95 (GHGLPHAGHLLGKGQSASC) and 105-114 (ATPSAASSAC). Positions 115–128 (NQATPEHPNSSASA) are enriched in polar residues. Residues 133 to 138 (VYPWMK) carry the Antp-type hexapeptide motif. A DNA-binding region (homeobox) is located at residues 154-213 (PKRSRTAYTRQQVLELEKEFHYNRYLTRRRRIEIAHSLVLSERQIKIWFQNRRMKWKKDH). Residues 212-268 (DHRLPNTKVRSSSSTGISSGSNTSSAAGVVAAASTTNTMSASEDLSGTERGEDITRL) are disordered. The span at 222–253 (SSSSTGISSGSNTSSAAGVVAAASTTNTMSAS) shows a compositional bias: low complexity. A compositionally biased stretch (basic and acidic residues) spans 258–268 (GTERGEDITRL).

This sequence belongs to the Antp homeobox family. Deformed subfamily.

The protein localises to the nucleus. Sequence-specific transcription factor which is part of a developmental regulatory system that provides cells with specific positional identities on the anterior-posterior axis. This is Homeobox protein Hox-C4a (hoxc4a) from Danio rerio (Zebrafish).